Consider the following 254-residue polypeptide: MSIAEFAYKEKPETLVLFDVDGTLTPARLTVSEEVRKTLAKLRNKCCIGFVGGSDLSKQLEQLGPNVLDEFDYSFSENGLTAYRLGKELASQSFINWLGEEKYNKLAVFILRYLSEIDLPKRRGTFLEFRNGMINVSPIGRNASTEERNEFERYDKEHQIRAKFVEALKKEFPDYGLTFSIGGQISFDVFPAGWDKTYCLQHVEKDGFKEIHFFGDKTMVGGNDYEIFVDERTIGHSVQSPDDTVKILTELFNL.

The active-site Nucleophile is Asp-19. Mg(2+) contacts are provided by Asp-19 and Asp-21. Residue Asp-21 is the Proton donor/acceptor of the active site. The alpha-D-mannose 1-phosphate site is built by Arg-28, Arg-130, Arg-141, Arg-148, Ser-186, and Asp-188. Mg(2+) is bound by residues Asp-216, Phe-228, Asp-230, and Thr-233. Phosphoserine is present on Ser-240.

This sequence belongs to the eukaryotic PMM family. As to quaternary structure, homodimer.

It localises to the cytoplasm. It catalyses the reaction alpha-D-mannose 1-phosphate = D-mannose 6-phosphate. Its pathway is nucleotide-sugar biosynthesis; GDP-alpha-D-mannose biosynthesis; alpha-D-mannose 1-phosphate from D-fructose 6-phosphate: step 2/2. Its function is as follows. Involved in the synthesis of the GDP-mannose and dolichol-phosphate-mannose required for a number of critical mannosyl transfer reactions such as folding and glycosylation of secretory proteins in the ER lumen. This Saccharomyces cerevisiae (strain ATCC 204508 / S288c) (Baker's yeast) protein is Phosphomannomutase.